The chain runs to 347 residues: NADH-ubiquinone oxidoreductase chain 2 (347 aa).

Helical transmembrane passes span 1 to 21 (MNPIIFFMIMLTIILGTTIVM), 25 to 45 (HWLTVWMGFEMNMLAIIPMLM), 59 to 79 (YFLTQATASMLLLLAITINLM), 96 to 116 (IILTIALAMKLGLAPFHFWVP), 148 to 168 (IINLDLLLMMGLLSVMIGGWG), 178 to 198 (IMAYSSIAHMGWMVTILIYNP), 200 to 220 (LTMLNLTIYIMMTLTMFMLLI), 237 to 257 (MPLITTMMLTTLLSMGGLPPL), 274 to 294 (NSIILPTFMAITALLNLYFYM), and 326 to 346 (LSPLMVISTMTLPLTPMMMIL).

It belongs to the complex I subunit 2 family. In terms of assembly, core subunit of respiratory chain NADH dehydrogenase (Complex I) which is composed of 45 different subunits. Interacts with TMEM242.

It localises to the mitochondrion inner membrane. The enzyme catalyses a ubiquinone + NADH + 5 H(+)(in) = a ubiquinol + NAD(+) + 4 H(+)(out). In terms of biological role, core subunit of the mitochondrial membrane respiratory chain NADH dehydrogenase (Complex I) which catalyzes electron transfer from NADH through the respiratory chain, using ubiquinone as an electron acceptor. Essential for the catalytic activity and assembly of complex I. This Gardnerycteris crenulata (Striped hairy-nosed bat) protein is NADH-ubiquinone oxidoreductase chain 2.